A 661-amino-acid chain; its full sequence is CD180 antigen (661 aa).

The N-terminal stretch at 1–20 (MAPDISCFFLVALFLASCRA) is a signal peptide. Residues 21–626 (TTSSDQKCIE…RLSDVTLSCS (606 aa)) are Extracellular-facing. The LRRNT domain occupies 33–53 (VNKTYNCENLGLNEIPGTLPN). Asn34, Asn53, Asn70, and Asn78 each carry an N-linked (GlcNAc...) asparagine glycan. 7 LRR repeats span residues 54 to 75 (STEC…TFSR), 78 to 99 (NLTF…TFQS), 102 to 123 (RLDT…ALSG), 126 to 147 (ALKH…PLHN), 150 to 171 (TLES…KGFP), 174 to 195 (KLKV…DMSS), and 201 to 221 (NLSL…AFDS). N-linked (GlcNAc...) asparagine glycans are attached at residues Asn201, Asn244, and Asn288. LRR repeat units lie at residues 275-296 (SVES…TFHC), 299-321 (GLQE…VGLS), 322-343 (TLKK…SASN), 346-366 (SLTH…TGCL), and 371-391 (NLRE…CNLQ). N-linked (GlcNAc...) asparagine glycosylation is found at Asn394 and Asn402. LRR repeat units follow at residues 397–418 (HLQS…AFKE), 421–442 (QLEL…SPFQ), 446–466 (LLKV…QLFD), 470–493 (ALQH…NSLQ), 497–518 (RLEI…AFTS), 521–544 (MMNH…SHLK), and 546–566 (IYLN…LPIL). N-linked (GlcNAc...) asparagine glycosylation is present at Asn451. The LRRCT domain occupies 577 to 627 (NPLDCTCSNIYFLEWYKENMQKLEDTEDTLCENPPLLRGVRLSDVTLSCSM). A helical membrane pass occupies residues 627 to 650 (MAAVGIFFLIVFLLVFAILLIFAV). The Cytoplasmic segment spans residues 651–661 (KYFLRWKYQHI).

The protein belongs to the Toll-like receptor family. M-shaped tetramer of two CD180-LY86 heterodimers. B-lymphocytes and spleen. Not detected in thymus, kidney, muscle, heart, brain or liver.

The protein localises to the cell membrane. Functionally, may cooperate with MD-1 and TLR4 to mediate the innate immune response to bacterial lipopolysaccharide (LPS) in B-cells. Leads to NF-kappa-B activation. Also involved in the life/death decision of B-cells. The protein is CD180 antigen (Cd180) of Mus musculus (Mouse).